The following is a 309-amino-acid chain: Tagatose-6-phosphate kinase (309 aa).

This sequence belongs to the carbohydrate kinase PfkB family. LacC subfamily.

It catalyses the reaction D-tagatofuranose 6-phosphate + ATP = D-tagatofuranose 1,6-bisphosphate + ADP + H(+). Its pathway is carbohydrate metabolism; D-tagatose 6-phosphate degradation; D-glyceraldehyde 3-phosphate and glycerone phosphate from D-tagatose 6-phosphate: step 1/2. The sequence is that of Tagatose-6-phosphate kinase from Streptococcus pneumoniae (strain P1031).